The sequence spans 369 residues: Flagellar P-ring protein (369 aa).

Positions 1–24 are cleaved as a signal peptide; the sequence is MKTLHRCIGVALLALGALAGTAHA.

This sequence belongs to the FlgI family. The basal body constitutes a major portion of the flagellar organelle and consists of four rings (L,P,S, and M) mounted on a central rod.

The protein resides in the periplasm. Its subcellular location is the bacterial flagellum basal body. Functionally, assembles around the rod to form the L-ring and probably protects the motor/basal body from shearing forces during rotation. The protein is Flagellar P-ring protein of Ralstonia nicotianae (strain ATCC BAA-1114 / GMI1000) (Ralstonia solanacearum).